A 307-amino-acid chain; its full sequence is Oxygen-dependent coproporphyrinogen-III oxidase (307 aa).

S99 serves as a coordination point for substrate. A divalent metal cation-binding residues include H103 and H113. H113 (proton donor) is an active-site residue. 115–117 (NVR) lines the substrate pocket. H152 and H182 together coordinate a divalent metal cation. The important for dimerization stretch occupies residues 247-282 (YVEFNLVFDRGTLFGLQSGGRTESILMSMPPVVNWR). 265–267 (GGR) is a binding site for substrate.

This sequence belongs to the aerobic coproporphyrinogen-III oxidase family. In terms of assembly, homodimer. The cofactor is a divalent metal cation.

It is found in the cytoplasm. It carries out the reaction coproporphyrinogen III + O2 + 2 H(+) = protoporphyrinogen IX + 2 CO2 + 2 H2O. The protein operates within porphyrin-containing compound metabolism; protoporphyrin-IX biosynthesis; protoporphyrinogen-IX from coproporphyrinogen-III (O2 route): step 1/1. In terms of biological role, involved in the heme biosynthesis. Catalyzes the aerobic oxidative decarboxylation of propionate groups of rings A and B of coproporphyrinogen-III to yield the vinyl groups in protoporphyrinogen-IX. The sequence is that of Oxygen-dependent coproporphyrinogen-III oxidase from Paraburkholderia phytofirmans (strain DSM 17436 / LMG 22146 / PsJN) (Burkholderia phytofirmans).